We begin with the raw amino-acid sequence, 807 residues long: 1,4-alpha-glucan branching enzyme GlgB (807 aa).

Asp405 acts as the Nucleophile in catalysis. The Proton donor role is filled by Glu458.

It belongs to the glycosyl hydrolase 13 family. GlgB subfamily. In terms of assembly, monomer.

It carries out the reaction Transfers a segment of a (1-&gt;4)-alpha-D-glucan chain to a primary hydroxy group in a similar glucan chain.. It participates in glycan biosynthesis; glycogen biosynthesis. Catalyzes the formation of the alpha-1,6-glucosidic linkages in glycogen by scission of a 1,4-alpha-linked oligosaccharide from growing alpha-1,4-glucan chains and the subsequent attachment of the oligosaccharide to the alpha-1,6 position. This Histophilus somni (strain 129Pt) (Haemophilus somnus) protein is 1,4-alpha-glucan branching enzyme GlgB.